Reading from the N-terminus, the 286-residue chain is Shikimate dehydrogenase (NADP(+)) (286 aa).

Shikimate-binding positions include serine 19–serine 21 and threonine 66. The Proton acceptor role is filled by lysine 70. Positions 91 and 107 each coordinate shikimate. Residues glycine 129 to alanine 133 and leucine 229 each bind NADP(+). Shikimate is bound at residue tyrosine 231. Glycine 252 lines the NADP(+) pocket.

It belongs to the shikimate dehydrogenase family. Homodimer.

It catalyses the reaction shikimate + NADP(+) = 3-dehydroshikimate + NADPH + H(+). It functions in the pathway metabolic intermediate biosynthesis; chorismate biosynthesis; chorismate from D-erythrose 4-phosphate and phosphoenolpyruvate: step 4/7. Functionally, involved in the biosynthesis of the chorismate, which leads to the biosynthesis of aromatic amino acids. Catalyzes the reversible NADPH linked reduction of 3-dehydroshikimate (DHSA) to yield shikimate (SA). The chain is Shikimate dehydrogenase (NADP(+)) from Prochlorococcus marinus (strain MIT 9215).